The primary structure comprises 299 residues: Protease HtpX homolog (299 aa).

2 helical membrane passes run 19–39 and 41–61; these read LFIV…VWYF and WGLT…WIAY. Position 146 (histidine 146) interacts with Zn(2+). Glutamate 147 is an active-site residue. Histidine 150 contributes to the Zn(2+) binding site. Helical transmembrane passes span 156 to 176 and 198 to 218; these read ILLM…RDVM and IILL…VLII. Glutamate 227 is a Zn(2+) binding site.

This sequence belongs to the peptidase M48B family. Zn(2+) serves as cofactor.

It is found in the cell membrane. This is Protease HtpX homolog from Thermoanaerobacter pseudethanolicus (strain ATCC 33223 / 39E) (Clostridium thermohydrosulfuricum).